We begin with the raw amino-acid sequence, 284 residues long: Bifunctional protein FolD (284 aa).

Residues 165–167 and S190 contribute to the NADP(+) site; that span reads GRS.

The protein belongs to the tetrahydrofolate dehydrogenase/cyclohydrolase family. As to quaternary structure, homodimer.

The enzyme catalyses (6R)-5,10-methylene-5,6,7,8-tetrahydrofolate + NADP(+) = (6R)-5,10-methenyltetrahydrofolate + NADPH. It catalyses the reaction (6R)-5,10-methenyltetrahydrofolate + H2O = (6R)-10-formyltetrahydrofolate + H(+). It participates in one-carbon metabolism; tetrahydrofolate interconversion. In terms of biological role, catalyzes the oxidation of 5,10-methylenetetrahydrofolate to 5,10-methenyltetrahydrofolate and then the hydrolysis of 5,10-methenyltetrahydrofolate to 10-formyltetrahydrofolate. The sequence is that of Bifunctional protein FolD from Streptococcus mutans serotype c (strain ATCC 700610 / UA159).